Consider the following 360-residue polypeptide: Peptide chain release factor 1 (360 aa).

At glutamine 235 the chain carries N5-methylglutamine. The segment at 284 to 304 (KVDSERSADRKSQVGSGDRSE) is disordered.

Belongs to the prokaryotic/mitochondrial release factor family. Methylated by PrmC. Methylation increases the termination efficiency of RF1.

It localises to the cytoplasm. Its function is as follows. Peptide chain release factor 1 directs the termination of translation in response to the peptide chain termination codons UAG and UAA. The polypeptide is Peptide chain release factor 1 (Agrobacterium fabrum (strain C58 / ATCC 33970) (Agrobacterium tumefaciens (strain C58))).